We begin with the raw amino-acid sequence, 159 residues long: Nucleoside diphosphate kinase (159 aa).

Residues Lys-14, Phe-62, Arg-90, Thr-96, and Arg-107 each contribute to the ATP site. The active-site Pros-phosphohistidine intermediate is His-123.

It belongs to the NDK family. Requires Mg(2+) as cofactor.

The protein resides in the cytoplasm. The catalysed reaction is a 2'-deoxyribonucleoside 5'-diphosphate + ATP = a 2'-deoxyribonucleoside 5'-triphosphate + ADP. It carries out the reaction a ribonucleoside 5'-diphosphate + ATP = a ribonucleoside 5'-triphosphate + ADP. Functionally, major role in the synthesis of nucleoside triphosphates other than ATP. The ATP gamma phosphate is transferred to the NDP beta phosphate via a ping-pong mechanism, using a phosphorylated active-site intermediate. In Pyrococcus abyssi (strain GE5 / Orsay), this protein is Nucleoside diphosphate kinase.